A 427-amino-acid chain; its full sequence is Serine--tRNA ligase (427 aa).

229–231 (TAE) contributes to the L-serine binding site. 260 to 262 (RSE) serves as a coordination point for ATP. Glu283 contributes to the L-serine binding site. 347-350 (EISS) lines the ATP pocket. An L-serine-binding site is contributed by Ser383.

The protein belongs to the class-II aminoacyl-tRNA synthetase family. Type-1 seryl-tRNA synthetase subfamily. As to quaternary structure, homodimer. The tRNA molecule binds across the dimer.

Its subcellular location is the cytoplasm. The enzyme catalyses tRNA(Ser) + L-serine + ATP = L-seryl-tRNA(Ser) + AMP + diphosphate + H(+). It catalyses the reaction tRNA(Sec) + L-serine + ATP = L-seryl-tRNA(Sec) + AMP + diphosphate + H(+). Its pathway is aminoacyl-tRNA biosynthesis; selenocysteinyl-tRNA(Sec) biosynthesis; L-seryl-tRNA(Sec) from L-serine and tRNA(Sec): step 1/1. In terms of biological role, catalyzes the attachment of serine to tRNA(Ser). Is also able to aminoacylate tRNA(Sec) with serine, to form the misacylated tRNA L-seryl-tRNA(Sec), which will be further converted into selenocysteinyl-tRNA(Sec). The polypeptide is Serine--tRNA ligase (Nitrosococcus oceani (strain ATCC 19707 / BCRC 17464 / JCM 30415 / NCIMB 11848 / C-107)).